The following is a 739-amino-acid chain: Eukaryotic translation initiation factor 3 subunit B (739 aa).

Residues 1-98 (MSINEEDYLQ…LFIQFKSTES (98 aa)) form a sufficient for interaction with HCR1 and TIF32 region. Residues 1–224 (MSINEEDYLQ…GIQSWGGANF (224 aa)) are sufficient for interaction with PIC8. In terms of domain architecture, RRM spans 37-124 (NYIIVDGAPI…HRLLVNKLSD (88 aa)). WD repeat units lie at residues 190–229 (PRKG…SIKR), 231–293 (FHQQ…RTFA), 301–339 (QKEM…QLLD), 343–385 (VKVD…QTAR), 453–502 (ELKD…KGGV), 537–579 (IENK…ETNK), and 592–630 (DKFS…YEFT).

The protein belongs to the eIF-3 subunit B family. Component of the eukaryotic translation initiation factor 3 (eIF-3) complex.

It is found in the cytoplasm. RNA-binding component of the eukaryotic translation initiation factor 3 (eIF-3) complex, which is involved in protein synthesis of a specialized repertoire of mRNAs and, together with other initiation factors, stimulates binding of mRNA and methionyl-tRNAi to the 40S ribosome. The eIF-3 complex specifically targets and initiates translation of a subset of mRNAs involved in cell proliferation. The sequence is that of Eukaryotic translation initiation factor 3 subunit B from Candida albicans (strain SC5314 / ATCC MYA-2876) (Yeast).